Here is a 545-residue protein sequence, read N- to C-terminus: Tyrosine decarboxylase 2 (545 aa).

Residues 23-44 (GYTNGNGHTNGNGNYNGNGHVN) are compositionally biased toward gly residues. Positions 23-45 (GYTNGNGHTNGNGNYNGNGHVNG) are disordered. Residues histidine 245 and histidine 360 each contribute to the L-tyrosine site. Lysine 361 carries the N6-(pyridoxal phosphate)lysine modification. Residue tyrosine 390 participates in L-tyrosine binding.

This sequence belongs to the group II decarboxylase family. In terms of assembly, homotetramer. Requires pyridoxal 5'-phosphate as cofactor. As to expression, expressed specifically in flowers.

It is found in the cytoplasm. It catalyses the reaction L-tyrosine + H(+) = tyramine + CO2. Functionally, converts tyrosine into tyramine, a precursor of isoquinoline alkaloids and various amides. In Arabidopsis thaliana (Mouse-ear cress), this protein is Tyrosine decarboxylase 2.